The following is a 712-amino-acid chain: DNA ligase (712 aa).

Residues 53–57, 103–104, and Glu-133 contribute to the NAD(+) site; these read DAEFD and SL. Lys-135 serves as the catalytic N6-AMP-lysine intermediate. Positions 156, 196, 315, and 339 each coordinate NAD(+). Zn(2+)-binding residues include Cys-433, Cys-436, Cys-452, and Cys-458. One can recognise a BRCT domain in the interval 622–711; sequence SIERTLEGLS…PERDAEDGEP (90 aa).

The protein belongs to the NAD-dependent DNA ligase family. LigA subfamily. Requires Mg(2+) as cofactor. The cofactor is Mn(2+).

It catalyses the reaction NAD(+) + (deoxyribonucleotide)n-3'-hydroxyl + 5'-phospho-(deoxyribonucleotide)m = (deoxyribonucleotide)n+m + AMP + beta-nicotinamide D-nucleotide.. Its function is as follows. DNA ligase that catalyzes the formation of phosphodiester linkages between 5'-phosphoryl and 3'-hydroxyl groups in double-stranded DNA using NAD as a coenzyme and as the energy source for the reaction. It is essential for DNA replication and repair of damaged DNA. In Mycolicibacterium gilvum (strain PYR-GCK) (Mycobacterium gilvum (strain PYR-GCK)), this protein is DNA ligase.